A 245-amino-acid polypeptide reads, in one-letter code: NAD-dependent protein deacylase (245 aa).

The 245-residue stretch at 1-245 folds into the Deacetylase sirtuin-type domain; that stretch reads MEAVWESARI…RLSRAMGIDI (245 aa). 22–41 is an NAD(+) binding site; that stretch reads GAGISAESGIPTFRGKDGLW. 2 residues coordinate substrate: Tyr-66 and Arg-69. 100–103 lines the NAD(+) pocket; sequence QNVD. Catalysis depends on His-118, which acts as the Proton acceptor. Positions 126, 129, 146, and 149 each coordinate Zn(2+). NAD(+)-binding positions include 186–188, 212–214, and Met-241; these read GTS and NPE.

The protein belongs to the sirtuin family. Class III subfamily. It depends on Zn(2+) as a cofactor.

The protein localises to the cytoplasm. It catalyses the reaction N(6)-acetyl-L-lysyl-[protein] + NAD(+) + H2O = 2''-O-acetyl-ADP-D-ribose + nicotinamide + L-lysyl-[protein]. The catalysed reaction is N(6)-succinyl-L-lysyl-[protein] + NAD(+) + H2O = 2''-O-succinyl-ADP-D-ribose + nicotinamide + L-lysyl-[protein]. NAD-dependent lysine deacetylase and desuccinylase that specifically removes acetyl and succinyl groups on target proteins. Modulates the activities of several proteins which are inactive in their acylated form. Deacetylates the N-terminal lysine residue of Alba, the major archaeal chromatin protein and that, in turn, increases Alba's DNA binding affinity, thereby repressing transcription. The polypeptide is NAD-dependent protein deacylase (Aeropyrum pernix (strain ATCC 700893 / DSM 11879 / JCM 9820 / NBRC 100138 / K1)).